A 315-amino-acid chain; its full sequence is Fe(3+)-citrate-binding protein YfmC (315 aa).

The N-terminal stretch at 1 to 18 (MRTYSNKLIAIMSVLLLA) is a signal peptide. The N-palmitoyl cysteine moiety is linked to residue Cys-19. Cys-19 is lipidated: S-diacylglycerol cysteine. Residues 27 to 36 (SSQNNNGSGK) show a composition bias toward low complexity. The disordered stretch occupies residues 27-52 (SSQNNNGSGKSESKDSRVIHDEEGKT). Positions 37–51 (SESKDSRVIHDEEGK) are enriched in basic and acidic residues. The region spanning 60–315 (RVVVLELSFL…KDVLKKVYNK (256 aa)) is the Fe/B12 periplasmic-binding domain.

It belongs to the bacterial solute-binding protein 8 family. The complex is composed of one ATP-binding protein (YfmF), two transmembrane proteins (YfmD and YfmE) and a solute-binding protein (YfmC).

It localises to the cell membrane. Functionally, part of the ABC transporter complex YfmCDEF involved in citrate-dependent Fe(3+) import. Binds citrate-dependent Fe(3+) and delivers it to the surface of YfmDE. The polypeptide is Fe(3+)-citrate-binding protein YfmC (yfmC) (Bacillus subtilis (strain 168)).